Reading from the N-terminus, the 233-residue chain is Merozoite surface protein 1 (233 aa).

Residues 1–19 form the signal peptide; the sequence is MKIIFFLCSFLFFIINTQC. Polar residues predominate over residues 58-67; the sequence is SGTAVTTSTP. The interval 58–110 is disordered; sequence SGTAVTTSTPGSKGSVASGGSGGSVASGGSVASGGSGNSRRTNPSDNSSDSDA. Over residues 74–94 the composition is skewed to gly residues; sequence ASGGSGGSVASGGSVASGGSG. Polar residues predominate over residues 95–107; sequence NSRRTNPSDNSSD. N-linked (GlcNAc...) asparagine glycosylation occurs at N104.

As to quaternary structure, forms a complex composed of subunits p83, p30, p38, and p42 which remain non-covalently associated; the complex is formed at the merozoite surface prior to egress from host erythrocytes. Forms a complex composed of processed MSP1 subunits, MSP6 subunit p36 and MSP7; the complex is formed at the merozoite surface prior to egress from host erythrocytes. Within the complex, interacts (via subunit p38) with MSP6 subunit p36 and (via subunits p83, p30 and p38) with MSP7 (via subunit p22). Forms a complex composed of MSP1, MSP6, DBLMSP1 and DBLMSP2. Within the complex, interacts (via subunit p38) with DBLMSP1 and DBLMSP2. Forms a complex composed of MSP1, and rhoptry proteins RhopH3, RAP1 and CLAG9/RhopH3. Within the complex, interacts (via subunits p42 and p19) with RhopH3 (via C-terminus). Forms a complex composed of MSP1, MSP6, MSP7, MSP9 and MSP3; within the complex, MSP6 and MSP9 mediate the binding to the host erythrocyte. Interacts (via subunits p19 and p42) with MSP9; the interaction is direct; MSP1 subunits p19 or p42, and MSP9 form a co-ligand complex that interacts with host SLC4A1/Band 3 protein. May interact with PFD6. Interacts with host spectrin. In terms of processing, the p190 precursor is cleaved by SUB1 prior to merozoite egress into 4 subunits p83, p30, p38, and p42 which remain non-covalently associated. SUB1-mediated proteolytic cleavage occurs in an orderly manner; the first cleavage occurs at the p83/p30 site, followed by cleavage at the p30/p38 site, the last cleavage occurs at the p38/p42 site. The order of cleavage is essential for parasite viability. SUB1-mediated processing is essential for merozoite egress. In a second processing step during erythrocyte invasion, p42 is cleaved by SUB2 into p33 and p19; the latter remains attached to the merozoite surface via its GPI-anchor and stays on the surface during the subsequent ring stage.

It is found in the cell membrane. The protein localises to the secreted. Functionally, during the asexual blood stage, involved in merozoite egress from host erythrocytes possibly via its interaction with the host cytoskeleton protein spectrin resulting in the destabilization of the host cytoskeleton and thus leading to erythrocyte cell membrane rupture. Involved in the binding to host erythrocytes and is required for host erythrocyte invasion. This chain is Merozoite surface protein 1, found in Plasmodium falciparum (isolate CDC / Honduras).